A 448-amino-acid chain; its full sequence is Damage-control phosphatase ARMT1 (448 aa).

Mn(2+)-binding residues include D257 and N258. Position 257-258 (257-258) interacts with substrate; it reads DN. S-adenosyl-L-methionine contacts are provided by E262 and D295. Mn(2+) is bound at residue D295. Substrate contacts are provided by residues 371–375 and K408; that span reads DLNYR. The Subfamily III RTxK motif signature appears at 405 to 408; that stretch reads RTLK.

It belongs to the damage-control phosphatase family. Sugar phosphate phosphatase III subfamily. It depends on Mn(2+) as a cofactor. Ni(2+) serves as cofactor. Automethylated.

The catalysed reaction is beta-D-fructose 1-phosphate + H2O = D-fructose + phosphate. It carries out the reaction beta-D-fructose 6-phosphate = dihydroxyacetone + D-glyceraldehyde 3-phosphate. It catalyses the reaction L-glutamyl-[protein] + S-adenosyl-L-methionine = [protein]-L-glutamate 5-O-methyl ester + S-adenosyl-L-homocysteine. Metal-dependent phosphatase that shows phosphatase activity against several substrates, including fructose-1-phosphate and fructose-6-phosphate. Its preference for fructose-1-phosphate, a strong glycating agent that causes DNA damage rather than a canonical yeast metabolite, suggests a damage-control function in hexose phosphate metabolism. Has also been shown to have O-methyltransferase activity that methylates glutamate residues of target proteins to form gamma-glutamyl methyl ester residues. Possibly methylates PCNA, suggesting it is involved in the DNA damage response. The chain is Damage-control phosphatase ARMT1 from Danio rerio (Zebrafish).